The chain runs to 368 residues: tRNA-specific 2-thiouridylase MnmA (368 aa).

Residues Gly11 to Ser18 and Met37 contribute to the ATP site. The tract at residues Asn97–Asp99 is interaction with target base in tRNA. Cys102 acts as the Nucleophile in catalysis. Cys102 and Cys199 are oxidised to a cystine. Gly127 serves as a coordination point for ATP. The interval Lys149–Gln151 is interaction with tRNA. The active-site Cysteine persulfide intermediate is Cys199. The tract at residues Arg311–Tyr312 is interaction with tRNA.

This sequence belongs to the MnmA/TRMU family. As to quaternary structure, interacts with TusE.

The protein localises to the cytoplasm. The catalysed reaction is S-sulfanyl-L-cysteinyl-[protein] + uridine(34) in tRNA + AH2 + ATP = 2-thiouridine(34) in tRNA + L-cysteinyl-[protein] + A + AMP + diphosphate + H(+). Catalyzes the 2-thiolation of uridine at the wobble position (U34) of tRNA(Lys), tRNA(Glu) and tRNA(Gln), leading to the formation of s(2)U34, the first step of tRNA-mnm(5)s(2)U34 synthesis. Sulfur is provided by IscS, via a sulfur-relay system. Binds ATP and its substrate tRNAs. This chain is tRNA-specific 2-thiouridylase MnmA, found in Shigella boydii serotype 18 (strain CDC 3083-94 / BS512).